The sequence spans 521 residues: DEAD-box ATP-dependent RNA helicase 12 (521 aa).

The tract at residues 1 to 97 (MHHPRARYPP…QQWLRRDQAT (97 aa)) is disordered. Residues 13 to 50 (TSGGGGGGGGGGGGGRGNGGGGFGGGGGGGGGNHGYYG) show a composition bias toward gly residues. Residues 51–89 (RGPQPQPQQQHYHHQAQQLHQHQQQQQHAQRNSSSQQQQ) are compositionally biased toward low complexity. The Q motif signature appears at 147–175 (NEFEDYFLKRELLMGIYEKGFERPSPIQE). In terms of domain architecture, Helicase ATP-binding spans 178–348 (IPIALTGSDI…EKYLPRPYVI (171 aa)). 191–198 (AKNGTGKT) is a binding site for ATP. Residues 296-299 (DEAD) carry the DEAD box motif. In terms of domain architecture, Helicase C-terminal spans 358-518 (GITQYYAFVE…TIPPQIDLAV (161 aa)).

Belongs to the DEAD box helicase family. DDX6/DHH1 subfamily.

Its subcellular location is the cytoplasm. The protein resides in the P-body. The catalysed reaction is ATP + H2O = ADP + phosphate + H(+). Functionally, ATP-dependent RNA helicase involved in mRNA turnover, and more specifically in mRNA decapping. The chain is DEAD-box ATP-dependent RNA helicase 12 from Oryza sativa subsp. japonica (Rice).